The sequence spans 557 residues: MAADVDKTPAGEQKDDHEDRGTPSSRRGRSRFTQISSLFIIAAIPVIGVCIKYYLDIQFVKRHEAGLKALGADGLFFFSSLDTDHDLYLSPEEFKPIAEKLTGVAPPPEYEEEIPHDPNGETLTLHAKMQPLLLESMTKSKDGFLGVSHSSLSGLRSWKRPAISSSTFYASQFKVFLPPSGKSAVGDTWWIIPSELNIFTGYLPNNRFHPPTPRGKEVLIHSLLSMFHPRPFVKSRFAPQGAVACIRATSDFYYDIVFRIHAEFQLNDVPDFPFWFTPGQFAGHIILSKDASHVRDFHIYVPNDKTLNVDMEWLYGASETSNMEVDIGYLPQMELGAEGPSTPSVIYDEQGNMIDSRGEGGEPIQFVFEEIVWSEELRREEASRRLEVTMYPFKKVPYLPFSEAFSRASAEKKLVHSILLWGALDDQSCUGSGRTLRETVLESSPVLALLNQSFISSWSLVKELEDLQGDVKNVELSEKARLHLEKYTFPVQMMVVLPNGTVVHHINANNFLDQTSMKPEDEGPGLSFSAGFEDPSTSTYIRFLQEGLEKAKPYLES.

Positions 1–21 (MAADVDKTPAGEQKDDHEDRG) are enriched in basic and acidic residues. Residues 1–28 (MAADVDKTPAGEQKDDHEDRGTPSSRRG) form a disordered region. Residues 35-55 (ISSLFIIAAIPVIGVCIKYYL) form a helical membrane-spanning segment. A non-standard amino acid (selenocysteine) is located at residue Sec-430. Asn-451 and Asn-499 each carry an N-linked (GlcNAc...) asparagine glycan.

Interacts with ryr3.

The protein resides in the endoplasmic reticulum membrane. In terms of biological role, plays an important role in cell protection against oxidative stress and in the regulation of redox-related calcium homeostasis. Regulates the calcium level of the ER by protecting the calcium pump ATP2A2 against the oxidoreductase ERO1A-mediated oxidative damage. Acts as a modulator of ryanodine receptor (RyR) activity: protects RyR from oxidation due to increased oxidative stress, or directly controls the RyR redox state, regulating the RyR-mediated calcium mobilization required for normal muscle development and differentiation. Plays an important role in muscle development and differentiation during early development. Required for development of the slow muscle fiber lineage. Required for the correct organization and attachment of the myofibrils, as well as for the continuity and integrity of the connective tissue that forms the myoseptum. In Danio rerio (Zebrafish), this protein is Selenoprotein N.